Here is a 168-residue protein sequence, read N- to C-terminus: Photosystem I assembly protein Ycf3 (168 aa).

3 TPR repeats span residues 35–68 (AFTY…EIDP), 72–105 (SYIL…NPFL), and 120–153 (GEQA…TPGN).

This sequence belongs to the Ycf3 family.

It is found in the plastid. Its subcellular location is the chloroplast thylakoid membrane. Essential for the assembly of the photosystem I (PSI) complex. May act as a chaperone-like factor to guide the assembly of the PSI subunits. In Solanum lycopersicum (Tomato), this protein is Photosystem I assembly protein Ycf3.